The primary structure comprises 220 residues: Chaperone protein TorD (220 aa).

This sequence belongs to the TorD/DmsD family. TorD subfamily.

It is found in the cytoplasm. Its function is as follows. Involved in the biogenesis of TorA. Acts on TorA before the insertion of the molybdenum cofactor and, as a result, probably favors a conformation of the apoenzyme that is competent for acquiring the cofactor. This chain is Chaperone protein TorD, found in Vibrio cholerae serotype O1 (strain ATCC 39315 / El Tor Inaba N16961).